The primary structure comprises 1325 residues: MNAENTFSILNTNEPNAGGSQVTESEIEEEDIEFLSFAALKIGATSSLSNSSLGLPEYSNLFAINNLKSLFVAGVPNYLIIGSTLDLQKSLIDADENVDANVLKDSASIRHVSLPDAKFSMVSFSSNGEFVIAYDFVSFELSVYETDALLKNSATSIYKAVFPDLVQVLPNPEINNLVILRNLKLEVFLLSLSKFQVESPLAKDATCAAWSRRGKQCVIGFNNGTMSQYTPAGEIKLRIPRPPSLENYFVECISWIENREFVVFYSPLTSLSNESDEPPHESECFVISVGMNGHFNFGKAGDPTPPFGAVNRRDHHYIASLHAWKPDLRSLVVVANTASADLGVLALSMEKNQWSILNIVDETKRASLPYSNKKDSDSSPTALVMDFTATDRISKPLDPTEAPADCSPLPIVWVFNDEFQLVAYRIFYADAISKSIDYPEMNVIKDKNKDSTVRASNNENIPTPDKQASPFVKNLSSTSSPFSQSSAFGNFKFGQATSFDKGLSTDASSGAKSNTPVFGQPSTFGQAPVFGQPSAFGQAPVFGQPSAFGQSSFSFGTSNMNQKLDFGTFKSPLSGAATGEAKTNLEKAVTSASGKASFTGFAPSQSTTSGLNFDSIPKDNEAASIFGSSQVSTKNTSGFQFSNNTLLADNVDEDIESDHDTKIEELANSDVEPSTEQNIGGDVSWGASTFQSKPQPSFSFGLTLDDKSNTPGKNFSIFGKTAETQVEQKKPENNVLTKPFSFAPSDKSMFAANIPSAGEGLDQQKTSKALPSTGITKLSENDNEKAEESNETKGFNTTIAKQNDKSSKSEGKASVANMSALNKSTNNETSDSKPSLKSPLFNFSADAPTFTFNKPSETPPFSFNKPLVEKESKQDVSDTSDRSPFSFKAFGIDSKKSPTPEPTEMAESNISEESEGWKLIEQPNVESEIEDQDEESSDLNGKRRSTPPKIHEVGVNKMLDVVPKEKRDLNSFFPKQPLVVQSTDKNKKEPQESLEDEILSAEGFSEVEAANKISRFEPFSSPKLKLATSDNAPEKYVFEESESSDLEEGPVPLRNLESLADLPEAESNEKLPMVNTFERLYLQFKNELDLVWQNINIIAEYIEGQTSTPSAVSEQATMAMLSQNTEELEDLLDTVTSFSAFCSDYSKQIDYLEACLVRINAKRIQVTRLLKALTNPAFEKQMELRQLGPEALRRQKELRLKMEKVLKSLSTLEQQAVDARMSDTRRFKKPTLGSIEVAYSRIATLLGQRLKQLYKLEKDIKRMATKKKMITKKSMSSDMMTQFRALGISQSSTKQVSAHYLREFERQDAFRNGVFKRLTSLKKAD.

4 disordered regions span residues 1-20 (MNAE…AGGS), 453-474 (VRAS…FVKN), 758-951 (GEGL…PKIH), and 973-994 (FPKQ…QESL). Residues 763–778 (QQKTSKALPSTGITKL) show a composition bias toward polar residues. The segment covering 779-791 (SENDNEKAEESNE) has biased composition (basic and acidic residues). Positions 792-801 (TKGFNTTIAK) are enriched in polar residues. Over residues 802–811 (QNDKSSKSEG) the composition is skewed to basic and acidic residues. 2 stretches are compositionally biased toward polar residues: residues 816-835 (ANMS…SKPS) and 850-861 (FTFNKPSETPPF). Positions 867 to 881 (LVEKESKQDVSDTSD) are enriched in basic and acidic residues. At T899 the chain carries Phosphothreonine. The span at 927 to 937 (SEIEDQDEESS) shows a compositional bias: acidic residues. Phosphothreonine is present on T946. Phosphoserine is present on residues S1041, S1043, and S1044.

The protein resides in the cytoplasm. Its subcellular location is the nucleus. Its function is as follows. Functions as a component of the nuclear pore complex (NPC). NPC components, collectively referred to as nucleoporins (NUPs), can play the role of both NPC structural components and of docking or interaction partners for transiently associated nuclear transport factors. Active directional transport is assured by both, a Phe-Gly (FG) repeat affinity gradient for these transport factors across the NPC and a transport cofactor concentration gradient across the nuclear envelope. This chain is Nucleoporin nup146 (nup146), found in Schizosaccharomyces pombe (strain 972 / ATCC 24843) (Fission yeast).